The chain runs to 1012 residues: Putative cellulose synthase-like protein D5 (1012 aa).

A disordered region spans residues 1–85; that stretch reads MSGDYANYTV…APSSNKSLLV (85 aa). Positions 20 to 37 are enriched in low complexity; it reads PSGGAPPAAPSAGGARPG. Residues 57–69 are compositionally biased toward basic and acidic residues; sequence GGGDDGAKMDRRL. The next 2 membrane-spanning stretches (helical) occupy residues 150 to 170 and 180 to 200; these read ILSPYRLLVLVRFVALFLFLV and ALWLWGISIVCEFWFAFSWLL. D280 is an active-site residue. A disordered region spans residues 597-620; sequence PRQGSEAMPGAGGGRSGGGSVGGD. Residues 606–618 are compositionally biased toward gly residues; sequence GAGGGRSGGGSVG. D717 is an active-site residue. Helical transmembrane passes span 799–819, 825–845, 871–891, 914–934, 948–968, and 978–998; these read LFLIMYCLLPALSLFSGQFIV, TFLSYLLLITITLMLLCLLEV, LAAVLQGLLKVVAGIEISFTL, SLFIPPLAVIGINIIALVVGV, LLGGGFFSFWVLAHYYPFAKG, and TIVYVWAGLISITVSLLWITI.

The protein belongs to the glycosyltransferase 2 family. Plant cellulose synthase-like D subfamily.

The protein localises to the golgi apparatus membrane. Functionally, thought to be a Golgi-localized beta-glycan synthase that polymerize the backbones of noncellulosic polysaccharides (hemicelluloses) of plant cell wall. This chain is Putative cellulose synthase-like protein D5 (CSLD5), found in Oryza sativa subsp. indica (Rice).